The chain runs to 936 residues: MTDYKDTLNLPQTDFPMRANLPEREPQTLARWQTLDLYRKIRKDREGQPKFILHDGPPYANGRAHLGTAFNKTLKDIVVKSKTLSGFDAPFVPGWDCHGLPIELNVEKKLGKDKLSANAFRQACRDYAFSQIELQRDDFQRLGVLGDWQHPYLTMDFGYEADTVRALAKIVANGHLLRGQKPVHWCAACGSALAEAEVEYRDKASPAVDVGFEAVDAEAVRQRFGVKNATTRVLVPIWTTTPWTLPANEAVSVHPELHYALVKSELQNQPVYLILAKDLVDSAMQRYGVDDYEVHGNLKGDALEGMQLQHPFLDRIVPIILGEHVTTEAGTGNVHTAPAHGLEDYFVAEKYNLPINNPVDARGRFIPDTFLVGGQPVFKANEPIIVLLADSGHLLHSETIQHSYPHCWRHKTPLIFRTTPQWFIGMNKNGLRERALAEIEKVTWLPAWGEARIGKMVADRPDWCISRQRLWGIPIPLFIHKKSGELHPKSPALMEKVAQLIEKESVDAWFDLDPKVLLGDDADHYEKVTDVLDVWFDSGVTHFCVLEKRRELKVPADIYLEGSDQHRGWFQSSLLTSLAIRDKAPYKSVLTYGFVVDSQGRKMSKSLGNVILPADVVKNLGADVLRLWAASMDYTVEVNVSDEILKRASDAYRRIRNTARFLLSNLYDFDPKKDKVAVDQLVALDRWAIFTTQKLQEKIITAYDRYRFPAIYQAIHNFCTVEMGSFYLDIIKDRLYTSKESGLPRRSAQTALYYIAEAFVRWIAPIISFTADEIWQFMPGDREPSVFLTQWFSDFPNAALSGEEEQRWQLLLQIRDEVNKALETYRNEGKIGSALAAEVVLYADERLNAAIATLGEELRFVLITSEASVLPFNEKSKAAFDTALPGLALEINVSEFEKCARCWQRRSSVGQIKEHADLCDRCVSNAFEDGEMRQFA.

The 'HIGH' region signature appears at 58–68 (PYANGRAHLGT). Glu-561 provides a ligand contact to L-isoleucyl-5'-AMP. A 'KMSKS' region motif is present at residues 602-606 (KMSKS). Lys-605 provides a ligand contact to ATP. Zn(2+) is bound by residues Cys-899, Cys-902, Cys-919, and Cys-922.

It belongs to the class-I aminoacyl-tRNA synthetase family. IleS type 1 subfamily. Monomer. It depends on Zn(2+) as a cofactor.

The protein localises to the cytoplasm. It catalyses the reaction tRNA(Ile) + L-isoleucine + ATP = L-isoleucyl-tRNA(Ile) + AMP + diphosphate. Its function is as follows. Catalyzes the attachment of isoleucine to tRNA(Ile). As IleRS can inadvertently accommodate and process structurally similar amino acids such as valine, to avoid such errors it has two additional distinct tRNA(Ile)-dependent editing activities. One activity is designated as 'pretransfer' editing and involves the hydrolysis of activated Val-AMP. The other activity is designated 'posttransfer' editing and involves deacylation of mischarged Val-tRNA(Ile). In Coxiella burnetii (strain Dugway 5J108-111), this protein is Isoleucine--tRNA ligase.